Here is a 268-residue protein sequence, read N- to C-terminus: Hydroxyethylthiazole kinase (268 aa).

Residue Met45 coordinates substrate. Arg121 and Thr167 together coordinate ATP. Residue Gly194 participates in substrate binding.

It belongs to the Thz kinase family. Mg(2+) is required as a cofactor.

It catalyses the reaction 5-(2-hydroxyethyl)-4-methylthiazole + ATP = 4-methyl-5-(2-phosphooxyethyl)-thiazole + ADP + H(+). It participates in cofactor biosynthesis; thiamine diphosphate biosynthesis; 4-methyl-5-(2-phosphoethyl)-thiazole from 5-(2-hydroxyethyl)-4-methylthiazole: step 1/1. Functionally, catalyzes the phosphorylation of the hydroxyl group of 4-methyl-5-beta-hydroxyethylthiazole (THZ). The chain is Hydroxyethylthiazole kinase from Bacillus thuringiensis (strain Al Hakam).